The following is a 211-amino-acid chain: Ribonuclease MRP protein subunit rmp1 (211 aa).

Residues 73–93 (PALGLVLLGILARVWFVMGGI) traverse the membrane as a helical segment. Serine 156 carries the post-translational modification Phosphoserine. A disordered region spans residues 178–211 (SQGTKRKSKNSNSTVKKKKKRARKGRDEIDDIFG). A compositionally biased stretch (basic residues) spans 181–201 (TKRKSKNSNSTVKKKKKRARK).

Component of RNase MRP complex which consists of an RNA moiety and at least 10 protein subunits.

It localises to the membrane. Its subcellular location is the nucleus. The protein localises to the nucleolus. Functions as part of ribonuclease MRP (RNase MRP), which is involved in rRNA processing in mitochondria. This Schizosaccharomyces pombe (strain 972 / ATCC 24843) (Fission yeast) protein is Ribonuclease MRP protein subunit rmp1.